A 676-amino-acid polypeptide reads, in one-letter code: DNA ligase (676 aa).

Residues 35 to 39 (DNEYD), 84 to 85 (SL), and glutamate 115 each bind NAD(+). The active-site N6-AMP-lysine intermediate is lysine 117. NAD(+) contacts are provided by arginine 138, glutamate 177, lysine 294, and lysine 318. The Zn(2+) site is built by cysteine 412, cysteine 415, cysteine 430, and cysteine 436. The region spanning 595–676 (PTRQPLNGES…FLAFLAQYSA (82 aa)) is the BRCT domain.

This sequence belongs to the NAD-dependent DNA ligase family. LigA subfamily. Mg(2+) serves as cofactor. The cofactor is Mn(2+).

It catalyses the reaction NAD(+) + (deoxyribonucleotide)n-3'-hydroxyl + 5'-phospho-(deoxyribonucleotide)m = (deoxyribonucleotide)n+m + AMP + beta-nicotinamide D-nucleotide.. In terms of biological role, DNA ligase that catalyzes the formation of phosphodiester linkages between 5'-phosphoryl and 3'-hydroxyl groups in double-stranded DNA using NAD as a coenzyme and as the energy source for the reaction. It is essential for DNA replication and repair of damaged DNA. The chain is DNA ligase from Acinetobacter baylyi (strain ATCC 33305 / BD413 / ADP1).